The primary structure comprises 660 residues: UPF0603 protein MT2410 (660 aa).

The N-terminal stretch at 1 to 26 (MRLVRLLGMVLTILAAGLLLGPPAGA) is a signal peptide. A helical membrane pass occupies residues 162-182 (VVLLVTVGIIVIVVAVLLVVM). A coiled-coil region spans residues 488-567 (DQLTKVDADL…LEAAHDRKSS (80 aa)). The chain crosses the membrane as a helical span at residues 605–625 (GGNNAGAILGGIIIGDLLSGG). The segment at 638–660 (FGGSSNAPGSSPDGGFLGGGGRF) is disordered.

This sequence belongs to the UPF0603 family.

The protein resides in the cell membrane. In terms of biological role, may play a role in septum formation. In Mycobacterium tuberculosis (strain CDC 1551 / Oshkosh), this protein is UPF0603 protein MT2410.